Consider the following 694-residue polypeptide: Katanin p80 WD40 repeat-containing subunit B1 (694 aa).

WD repeat units lie at residues alanine 18–serine 58, glycine 61–threonine 100, glycine 103–arginine 142, glycine 145–threonine 186, histidine 188–serine 226, and glycine 229–histidine 269. Disordered stretches follow at residues lysine 319 to alanine 410 and threonine 470 to isoleucine 492. Polar residues predominate over residues alanine 327–lysine 349. The span at glutamine 350–serine 378 shows a compositional bias: basic and acidic residues. Residues threonine 470–valine 481 are compositionally biased toward low complexity. Positions asparagine 482 to isoleucine 492 are enriched in polar residues.

The protein belongs to the WD repeat KATNB1 family. In terms of assembly, interacts with katna1. This interaction enhances the microtubule binding and severing activity of katna1 and also targets this activity to the centrosome.

Its subcellular location is the cytoplasm. It localises to the cytoskeleton. It is found in the microtubule organizing center. The protein resides in the centrosome. The protein localises to the spindle pole. Its subcellular location is the spindle. Its function is as follows. Participates in a complex which severs microtubules in an ATP-dependent manner. May act to target the enzymatic subunit of this complex to sites of action such as the centrosome. Microtubule severing may promote rapid reorganization of cellular microtubule arrays and the release of microtubules from the centrosome following nucleation. In Danio rerio (Zebrafish), this protein is Katanin p80 WD40 repeat-containing subunit B1 (katnb1).